We begin with the raw amino-acid sequence, 85 residues long: Large ribosomal subunit protein bL27 (85 aa).

The interval 1-21 (MAHKKGQGSTQNNRDSAGRRL) is disordered.

The protein belongs to the bacterial ribosomal protein bL27 family.

The polypeptide is Large ribosomal subunit protein bL27 (Wolinella succinogenes (strain ATCC 29543 / DSM 1740 / CCUG 13145 / JCM 31913 / LMG 7466 / NCTC 11488 / FDC 602W) (Vibrio succinogenes)).